The sequence spans 210 residues: Chaperone protein TorD (210 aa).

This sequence belongs to the TorD/DmsD family. TorD subfamily.

Its subcellular location is the cytoplasm. Functionally, involved in the biogenesis of TorA. Acts on TorA before the insertion of the molybdenum cofactor and, as a result, probably favors a conformation of the apoenzyme that is competent for acquiring the cofactor. The protein is Chaperone protein TorD of Salmonella dublin (strain CT_02021853).